We begin with the raw amino-acid sequence, 313 residues long: Carbamate kinase 2 (313 aa).

It belongs to the carbamate kinase family.

The protein resides in the cytoplasm. It catalyses the reaction hydrogencarbonate + NH4(+) + ATP = carbamoyl phosphate + ADP + H2O + H(+). Its pathway is metabolic intermediate metabolism; carbamoyl phosphate degradation; CO(2) and NH(3) from carbamoyl phosphate: step 1/1. This chain is Carbamate kinase 2 (arcC2), found in Staphylococcus aureus (strain MRSA252).